Here is a 447-residue protein sequence, read N- to C-terminus: Tubulin beta-1 chain (447 aa).

Gln11, Glu69, Ser138, Gly142, Thr143, Gly144, Asn204, and Asn226 together coordinate GTP. Glu69 contributes to the Mg(2+) binding site.

The protein belongs to the tubulin family. In terms of assembly, dimer of alpha and beta chains. A typical microtubule is a hollow water-filled tube with an outer diameter of 25 nm and an inner diameter of 15 nM. Alpha-beta heterodimers associate head-to-tail to form protofilaments running lengthwise along the microtubule wall with the beta-tubulin subunit facing the microtubule plus end conferring a structural polarity. Microtubules usually have 13 protofilaments but different protofilament numbers can be found in some organisms and specialized cells. Mg(2+) serves as cofactor.

The protein localises to the cytoplasm. The protein resides in the cytoskeleton. Its function is as follows. Tubulin is the major constituent of microtubules, a cylinder consisting of laterally associated linear protofilaments composed of alpha- and beta-tubulin heterodimers. Microtubules grow by the addition of GTP-tubulin dimers to the microtubule end, where a stabilizing cap forms. Below the cap, tubulin dimers are in GDP-bound state, owing to GTPase activity of alpha-tubulin. The protein is Tubulin beta-1 chain (benA) of Emericella nidulans (strain FGSC A4 / ATCC 38163 / CBS 112.46 / NRRL 194 / M139) (Aspergillus nidulans).